Here is a 352-residue protein sequence, read N- to C-terminus: Alanine racemase (352 aa).

Catalysis depends on Lys-33, which acts as the Proton acceptor; specific for D-alanine. Lys-33 is modified (N6-(pyridoxal phosphate)lysine). A substrate-binding site is contributed by Arg-129. Tyr-250 acts as the Proton acceptor; specific for L-alanine in catalysis. Substrate is bound at residue Met-298.

It belongs to the alanine racemase family. The cofactor is pyridoxal 5'-phosphate.

It catalyses the reaction L-alanine = D-alanine. Its pathway is amino-acid biosynthesis; D-alanine biosynthesis; D-alanine from L-alanine: step 1/1. In terms of biological role, catalyzes the interconversion of L-alanine and D-alanine. May also act on other amino acids. The chain is Alanine racemase (alr) from Neisseria gonorrhoeae (strain ATCC 700825 / FA 1090).